A 406-amino-acid chain; its full sequence is Argininosuccinate synthase (406 aa).

Residues Ala-12–Ser-20 and Ala-39 each bind ATP. Residues Tyr-90 and Ser-95 each coordinate L-citrulline. Gly-120 provides a ligand contact to ATP. L-aspartate contacts are provided by Thr-122, Asn-126, and Asp-127. Asn-126 is a binding site for L-citrulline. Residues Arg-130, Ser-179, Ser-188, Glu-264, and Tyr-276 each contribute to the L-citrulline site.

This sequence belongs to the argininosuccinate synthase family. Type 1 subfamily. As to quaternary structure, homotetramer.

It is found in the cytoplasm. The catalysed reaction is L-citrulline + L-aspartate + ATP = 2-(N(omega)-L-arginino)succinate + AMP + diphosphate + H(+). Its pathway is amino-acid biosynthesis; L-arginine biosynthesis; L-arginine from L-ornithine and carbamoyl phosphate: step 2/3. The protein is Argininosuccinate synthase of Geotalea daltonii (strain DSM 22248 / JCM 15807 / FRC-32) (Geobacter daltonii).